The sequence spans 79 residues: Protein S100-G (79 aa).

S2 carries the N-acetylserine modification. EF-hand domains follow at residues 13-48 (IFEK…KGPS) and 45-79 (KGPS…KISQ). The Ca(2+) site is built by Q26 and E31. S42 carries the post-translational modification Phosphoserine. The Ca(2+) site is built by D58, N60, D62, E64, and E69.

Belongs to the S-100 family.

This Bos taurus (Bovine) protein is Protein S100-G (S100G).